We begin with the raw amino-acid sequence, 669 residues long: DNA ligase (669 aa).

Residues 34-38, 83-84, and E114 each bind NAD(+); these read DAEYD and SL. K116 (N6-AMP-lysine intermediate) is an active-site residue. The NAD(+) site is built by R137, E171, K287, and K311. Zn(2+) contacts are provided by C405, C408, C423, and C428. Residues 591 to 669 form the BRCT domain; it reads NVESYFAGKT…EERFLQELNK (79 aa).

Belongs to the NAD-dependent DNA ligase family. LigA subfamily. Mg(2+) is required as a cofactor. It depends on Mn(2+) as a cofactor.

It catalyses the reaction NAD(+) + (deoxyribonucleotide)n-3'-hydroxyl + 5'-phospho-(deoxyribonucleotide)m = (deoxyribonucleotide)n+m + AMP + beta-nicotinamide D-nucleotide.. Functionally, DNA ligase that catalyzes the formation of phosphodiester linkages between 5'-phosphoryl and 3'-hydroxyl groups in double-stranded DNA using NAD as a coenzyme and as the energy source for the reaction. It is essential for DNA replication and repair of damaged DNA. In Bacillus cereus (strain ATCC 10987 / NRS 248), this protein is DNA ligase.